We begin with the raw amino-acid sequence, 172 residues long: Translocon-associated protein subunit delta (172 aa).

Residues 1 to 24 (MAALASLGALALLLLSGLSCCSEA) form the signal peptide. A disulfide bridge connects residues Cys-25 and Cys-56. Topologically, residues 25–143 (CVEPQITPSY…SVDHRGTWNG (119 aa)) are lumenal. Lys-72 participates in a covalent cross-link: Glycyl lysine isopeptide (Lys-Gly) (interchain with G-Cter in ubiquitin). A helical membrane pass occupies residues 144–164 (PWVSTEVLAAAIGLVIYYLAF). Topologically, residues 165-172 (SAKSHIQA) are cytoplasmic.

It belongs to the TRAP-delta family. As to quaternary structure, heterotetramer of TRAP-alpha, TRAP-beta, TRAP-delta and TRAP-gamma.

The protein localises to the endoplasmic reticulum membrane. TRAP proteins are part of a complex whose function is to bind calcium to the ER membrane and thereby regulate the retention of ER resident proteins. The sequence is that of Translocon-associated protein subunit delta (SSR4) from Bos taurus (Bovine).